The sequence spans 208 residues: Large ribosomal subunit protein bL25 (208 aa).

The protein belongs to the bacterial ribosomal protein bL25 family. CTC subfamily. In terms of assembly, part of the 50S ribosomal subunit; part of the 5S rRNA/L5/L18/L25 subcomplex. Contacts the 5S rRNA. Binds to the 5S rRNA independently of L5 and L18.

Its function is as follows. This is one of the proteins that binds to the 5S RNA in the ribosome where it forms part of the central protuberance. In Syntrophotalea carbinolica (strain DSM 2380 / NBRC 103641 / GraBd1) (Pelobacter carbinolicus), this protein is Large ribosomal subunit protein bL25.